The primary structure comprises 424 residues: Probable ribonuclease FAU-1 (424 aa).

The protein belongs to the FAU-1 family.

Functionally, probable RNase involved in rRNA stability through maturation and/or degradation of precursor rRNAs. Binds to RNA in loop regions with AU-rich sequences. This is Probable ribonuclease FAU-1 from Saccharolobus solfataricus (strain ATCC 35092 / DSM 1617 / JCM 11322 / P2) (Sulfolobus solfataricus).